The primary structure comprises 299 residues: Taste receptor type 2 member 1 (299 aa).

The Extracellular segment spans residues 1 to 9; that stretch reads MLESHLIIY. The helical transmembrane segment at 10-30 threads the bilayer; sequence FLLAVIQFLLGTFTNGIIVVV. The Cytoplasmic segment spans residues 31–55; it reads NGIDLIKHRKMAPLDLLLSCLAVSR. The helical transmembrane segment at 56–76 threads the bilayer; sequence IFLQLFIFYINVVVIFLIEFI. The Extracellular segment spans residues 77–81; the sequence is TCSAS. A helical membrane pass occupies residues 82–102; it reads CAFLVFVNELELWLATWLGVF. The Cytoplasmic segment spans residues 103–124; the sequence is YCAKVASVLHPLFIWLKMRISK. The chain crosses the membrane as a helical span at residues 125–145; that stretch reads SVPWMILGSLLYVSMICIFHI. Topologically, residues 146-178 are extracellular; sequence KYTGFMVPYFLRNLFFQNATIQTEVKQAIQIFS. Residue Asn-163 is glycosylated (N-linked (GlcNAc...) asparagine). Residues 179–199 form a helical membrane-spanning segment; that stretch reads FVAELLVPLLIFLVAVLLLIF. Topologically, residues 200–222 are cytoplasmic; that stretch reads SLGRHTRQMRNTVAGSRVPGRGA. Residues 223–243 form a helical membrane-spanning segment; sequence HISALLSILSFLILYISHYLI. At 244–257 the chain is on the extracellular side; it reads KTFLSSLKFHVKRF. Residues 258 to 278 traverse the membrane as a helical segment; the sequence is VFLFCILVIGTYPSGHSLILI. Topologically, residues 279 to 299 are cytoplasmic; that stretch reads LGNPKLKQNTKKFLCHSKCCQ.

This sequence belongs to the G-protein coupled receptor T2R family.

It is found in the membrane. Its function is as follows. Receptor that may play a role in the perception of bitterness and is gustducin-linked. May play a role in sensing the chemical composition of the gastrointestinal content. The activity of this receptor may stimulate alpha gustducin, mediate PLC-beta-2 activation and lead to the gating of TRPM5. This is Taste receptor type 2 member 1 (TAS2R1) from Chlorocebus aethiops (Green monkey).